Here is a 145-residue protein sequence, read N- to C-terminus: Class I hydrophobin 1 (145 aa).

A signal peptide spans 1–18; the sequence is MYASVIIYTLVALCGVMS. 4 cysteine pairs are disulfide-bonded: Cys88–Cys118, Cys95–Cys112, Cys96–Cys106, and Cys119–Cys128. Asn108 carries an N-linked (GlcNAc...) asparagine glycan.

The protein belongs to the fungal hydrophobin family. Self-assembles to form functional amyloid fibrils called rodlets. Self-assembly into fibrillar rodlets occurs spontaneously at hydrophobic:hydrophilic interfaces and the rodlets further associate laterally to form amphipathic monolayers.

It is found in the secreted. Its subcellular location is the cell wall. In terms of biological role, aerial growth, conidiation, and dispersal of filamentous fungi in the environment rely upon a capability of their secreting small amphipathic proteins called hydrophobins (HPBs) with low sequence identity. Class I can self-assemble into an outermost layer of rodlet bundles on aerial cell surfaces, conferring cellular hydrophobicity that supports fungal growth, development and dispersal; whereas Class II form highly ordered films at water-air interfaces through intermolecular interactions but contribute nothing to the rodlet structure. Hyd1 is a class I hydrophobin that is involved in plant root attachment and colonization, and that might also protect the growing hyphae from locally synthesized plant defense compounds during the first stages of cucumber interaction, allowing this opportunistic, non-pathogenic fungus to colonize the intercellular spaces of the plant root. This is Class I hydrophobin 1 from Trichoderma asperellum (Filamentous fungus).